We begin with the raw amino-acid sequence, 595 residues long: Probable inactive glycosyltransferase 25 family member 3 (595 aa).

Residues 1–24 (MRAAPAAPLLQLLLLLGPRPEAAG) form the signal peptide. 4 N-linked (GlcNAc...) asparagine glycosylation sites follow: N75, N153, N237, and N360. Residues 576–595 (RLDLAGGSGHSLRPHPRDEL) are disordered. The Prevents secretion from ER motif lies at 592-595 (RDEL).

Belongs to the glycosyltransferase 25 family.

Its subcellular location is the endoplasmic reticulum lumen. Probable cell adhesion protein involved in leukocyte transmigration across the blood-brain barrier. Does not express any beta-galactosyltransferase activity in vitro. This chain is Probable inactive glycosyltransferase 25 family member 3 (CERCAM), found in Bos taurus (Bovine).